A 153-amino-acid polypeptide reads, in one-letter code: 3-hydroxyacyl-[acyl-carrier-protein] dehydratase FabZ (153 aa).

Residue His52 is part of the active site.

The protein belongs to the thioester dehydratase family. FabZ subfamily.

The protein resides in the cytoplasm. The catalysed reaction is a (3R)-hydroxyacyl-[ACP] = a (2E)-enoyl-[ACP] + H2O. Involved in unsaturated fatty acids biosynthesis. Catalyzes the dehydration of short chain beta-hydroxyacyl-ACPs and long chain saturated and unsaturated beta-hydroxyacyl-ACPs. This chain is 3-hydroxyacyl-[acyl-carrier-protein] dehydratase FabZ, found in Magnetococcus marinus (strain ATCC BAA-1437 / JCM 17883 / MC-1).